A 313-amino-acid polypeptide reads, in one-letter code: Ribonuclease HIII (313 aa).

The 217-residue stretch at 94-310 folds into the RNase H type-2 domain; the sequence is MSVIGSDEVG…TQKAKRLVER (217 aa). The a divalent metal cation site is built by D100, E101, and D205.

Belongs to the RNase HII family. RnhC subfamily. Mn(2+) serves as cofactor. The cofactor is Mg(2+).

The protein resides in the cytoplasm. It catalyses the reaction Endonucleolytic cleavage to 5'-phosphomonoester.. Its function is as follows. Endonuclease that specifically degrades the RNA of RNA-DNA hybrids. The polypeptide is Ribonuclease HIII (Bacillus velezensis (strain DSM 23117 / BGSC 10A6 / LMG 26770 / FZB42) (Bacillus amyloliquefaciens subsp. plantarum)).